Reading from the N-terminus, the 347-residue chain is DNA-directed RNA polymerase subunit alpha (347 aa).

The interval 1 to 243 is alpha N-terminal domain (alpha-NTD); sequence MLIKQGDRLI…DQISVFINFD (243 aa). The interval 260–347 is alpha C-terminal domain (alpha-CTD); that stretch reads VNENLFKGID…EWKRKQQNEA (88 aa).

The protein belongs to the RNA polymerase alpha chain family. In terms of assembly, homodimer. The RNAP catalytic core consists of 2 alpha, 1 beta, 1 beta' and 1 omega subunit. When a sigma factor is associated with the core the holoenzyme is formed, which can initiate transcription.

It catalyses the reaction RNA(n) + a ribonucleoside 5'-triphosphate = RNA(n+1) + diphosphate. DNA-dependent RNA polymerase catalyzes the transcription of DNA into RNA using the four ribonucleoside triphosphates as substrates. The sequence is that of DNA-directed RNA polymerase subunit alpha from Nitratidesulfovibrio vulgaris (strain DSM 19637 / Miyazaki F) (Desulfovibrio vulgaris).